Reading from the N-terminus, the 143-residue chain is Transcriptional regulator MraZ (143 aa).

2 consecutive SpoVT-AbrB domains span residues 5-47 (TYTP…SARE) and 76-119 (ASDE…DSES).

It belongs to the MraZ family. In terms of assembly, forms oligomers.

The protein resides in the cytoplasm. It localises to the nucleoid. The protein is Transcriptional regulator MraZ of Micrococcus luteus (strain ATCC 4698 / DSM 20030 / JCM 1464 / CCM 169 / CCUG 5858 / IAM 1056 / NBRC 3333 / NCIMB 9278 / NCTC 2665 / VKM Ac-2230) (Micrococcus lysodeikticus).